Here is a 161-residue protein sequence, read N- to C-terminus: Short form salivary protein D7S (161 aa).

Residues 1 to 18 (MKFPSILLAILLFKPITA) form the signal peptide. 3 cysteine pairs are disulfide-bonded: Cys33-Cys67, Cys47-Cys155, and Cys109-Cys125.

This sequence belongs to the PBP/GOBP family.

It is found in the secreted. In contrast to the related D7 salivary proteins, does not bind serotonin. The polypeptide is Short form salivary protein D7S (Culex quinquefasciatus (Southern house mosquito)).